The primary structure comprises 113 residues: uncharacterized protein (113 aa).

To H.influenzae HI_1053 and P.denitrificans COX locus Uncharacterized protein 4.

This is an uncharacterized protein from Cupriavidus necator (strain ATCC 17699 / DSM 428 / KCTC 22496 / NCIMB 10442 / H16 / Stanier 337) (Ralstonia eutropha).